Consider the following 306-residue polypeptide: MNRSLMSLLGREGLGEKITDATPLPDTAETIHISSLALLKMLQHARAGVPLEVMGLMLGELIDEYTIRVIDVFAMPQSGTSVSVEAIDPVFQTKMLDMLKQTGRDEIVIGWYHSHPGFGCWLSSVDVNTQQSFEQLQSRAVAVVVDPLQSVRGKVVIDAFRTIKTSPTAEPRQITSNLGHLQDPSIQALIHGLNRNYYSIAINYRKNELEQKMLLNLHKKKWTEGLIVDKFDTHEQSNEKQINNLLELTKQYQKSIQDEDKIEPEKKEVSAVGKLDPKRHLISDVHTLMANNVVRVLTVMLDTVTF.

In terms of domain architecture, MPN spans 31–166; it reads IHISSLALLK…IDAFRTIKTS (136 aa). The Zn(2+) site is built by His-113, His-115, and Asp-126. The JAMM motif signature appears at 113–126; sequence HSHPGFGCWLSSVD.

This sequence belongs to the peptidase M67A family. PSMD14 subfamily. In terms of assembly, component of the 19S regulatory cap of the 26S proteasome.

Functionally, metalloprotease component of the 26S proteasome that specifically cleaves 'Lys-63'-linked polyubiquitin chains. The 26S proteasome is involved in the ATP-dependent degradation of ubiquitinated proteins. The function of the 'Lys-63'-specific deubiquitination of the proteasome is unclear. This is 26S proteasome non-ATPase regulatory subunit 14 (psmD14) from Dictyostelium discoideum (Social amoeba).